The following is a 90-amino-acid chain: MSSGGLLLLLGLLTLWAELTPISGHDRPKFCYLPADPGECMAYIRSFYYDSESKKCKEFIYGGCHGNANNFPTRDKCRQTCRAPRKGRHT.

The first 24 residues, 1-24, serve as a signal peptide directing secretion; that stretch reads MSSGGLLLLLGLLTLWAELTPISG. A BPTI/Kunitz inhibitor domain is found at 31 to 81; the sequence is CYLPADPGECMAYIRSFYYDSESKKCKEFIYGGCHGNANNFPTRDKCRQTC. 3 disulfides stabilise this stretch: C31/C81, C40/C64, and C56/C77. Positions 85-90 are excised as a propeptide; that stretch reads RKGRHT.

It belongs to the venom Kunitz-type family. As to expression, expressed by the venom gland.

The protein localises to the secreted. Its function is as follows. Serine protease inhibitor. This is Kunitz-type serine protease inhibitor C4 from Daboia siamensis (Eastern Russel's viper).